The primary structure comprises 564 residues: Beta-hexosaminidase subunit B2 (564 aa).

The N-terminal stretch at 1–19 is a signal peptide; that stretch reads MKLKFIFLILFFIIGNSIG. Residues Asn-43, Asn-84, Asn-303, and Asn-347 are each glycosylated (N-linked (GlcNAc...) asparagine). The Proton donor role is filled by Glu-357. N-linked (GlcNAc...) asparagine glycosylation is found at Asn-364, Asn-377, Asn-439, Asn-524, and Asn-551.

It belongs to the glycosyl hydrolase 20 family.

It is found in the lysosome. The catalysed reaction is Hydrolysis of terminal non-reducing N-acetyl-D-hexosamine residues in N-acetyl-beta-D-hexosaminides.. Responsible for the degradation of GM2 gangliosides, and a variety of other molecules containing terminal N-acetyl hexosamines. In Dictyostelium discoideum (Social amoeba), this protein is Beta-hexosaminidase subunit B2 (hexb2).